We begin with the raw amino-acid sequence, 157 residues long: uncharacterized protein (157 aa).

An N-terminal signal peptide occupies residues 1–28 (MKRLFMKASLVLFAVVFVFAVKGAPAKA).

This is an uncharacterized protein from Bacillus subtilis (strain 168).